Here is a 143-residue protein sequence, read N- to C-terminus: Spanin, inner membrane subunit (143 aa).

Residues 1–7 (MLEFLRK) are Cytoplasmic-facing. Residues 8 to 24 (LIPWVLAGMLFGLGWHL) traverse the membrane as a helical; Signal-anchor for type II membrane protein segment. Residues 25–143 (GSDSMDAKWK…QDTIRELQRK (119 aa)) lie on the Periplasmic side of the membrane.

Belongs to the T7likevirus i-spanin family. In terms of assembly, interacts (via C-terminus) with the spanin outer lipoprotein subunit (o-spanin) (via C-terminus). Part of the spanin complex which spans the entire periplasmic space. The spanin complex is composed of spanin inner membrane subunit and spanin outer membrane subunit.

Its subcellular location is the host cell inner membrane. In terms of biological role, component of the spanin complex that disrupts the host outer membrane and participates in cell lysis during virus exit. The spanin complex conducts the final step in host lysis by disrupting the outer membrane after holin and endolysin action have permeabilized the inner membrane and degraded the host peptidoglycans. Host outer membrane disruption is possibly due to local fusion between the inner and outer membrane performed by the spanin complex. The chain is Spanin, inner membrane subunit from Escherichia coli (Bacteriophage T7).